The sequence spans 515 residues: NADH-quinone oxidoreductase subunit N (515 aa).

A run of 14 helical transmembrane segments spans residues 14 to 34, 40 to 60, 80 to 100, 138 to 158, 160 to 180, 195 to 215, 239 to 259, 271 to 291, 307 to 327, 333 to 353, 361 to 381, 404 to 424, 438 to 458, and 485 to 505; these read ITPI…EAFL, WSAQ…ALAL, APTL…ILLI, TEVF…CAAN, LLTM…MCGL, YFLL…LLYG, LFAG…VGPF, PTAV…GGIL, GVLY…GLTQ, MIAY…IALT, MFYL…ISLV, VAWV…TSGF, GMAP…FFYL, and AAIT…SLAL.

Belongs to the complex I subunit 2 family. NDH-1 is composed of 14 different subunits. Subunits NuoA, H, J, K, L, M, N constitute the membrane sector of the complex.

The protein localises to the cell membrane. It catalyses the reaction a quinone + NADH + 5 H(+)(in) = a quinol + NAD(+) + 4 H(+)(out). In terms of biological role, NDH-1 shuttles electrons from NADH, via FMN and iron-sulfur (Fe-S) centers, to quinones in the respiratory chain. The immediate electron acceptor for the enzyme in this species is believed to be a menaquinone. Couples the redox reaction to proton translocation (for every two electrons transferred, four hydrogen ions are translocated across the cytoplasmic membrane), and thus conserves the redox energy in a proton gradient. The sequence is that of NADH-quinone oxidoreductase subunit N from Saccharopolyspora erythraea (strain ATCC 11635 / DSM 40517 / JCM 4748 / NBRC 13426 / NCIMB 8594 / NRRL 2338).